The following is a 185-amino-acid chain: Peroxynitrite isomerase (185 aa).

Positions 1-21 (MHHPARELPFPDALRPGARPA) are disordered. The short motif at 34–40 (GTWRGTG) is the GXWXGXG element. His171 serves as a coordination point for heme b.

It belongs to the nitrobindin family. As to quaternary structure, homodimer. The cofactor is heme b.

The catalysed reaction is peroxynitrite = nitrate. It functions in the pathway nitrogen metabolism. Its function is as follows. Heme-binding protein able to scavenge peroxynitrite and to protect free L-tyrosine against peroxynitrite-mediated nitration, by acting as a peroxynitrite isomerase that converts peroxynitrite to nitrate. Therefore, this protein likely plays a role in peroxynitrite sensing and in the detoxification of reactive nitrogen and oxygen species (RNS and ROS, respectively). Is able to bind nitric oxide (NO) in vitro, but may act as a sensor of peroxynitrite levels in vivo. This Streptomyces griseus subsp. griseus (strain JCM 4626 / CBS 651.72 / NBRC 13350 / KCC S-0626 / ISP 5235) protein is Peroxynitrite isomerase.